We begin with the raw amino-acid sequence, 542 residues long: Putative cysteine ligase BshC (542 aa).

Residues Val458–Glu487 are a coiled coil.

The protein belongs to the BshC family.

Functionally, involved in bacillithiol (BSH) biosynthesis. May catalyze the last step of the pathway, the addition of cysteine to glucosamine malate (GlcN-Mal) to generate BSH. The chain is Putative cysteine ligase BshC from Geobacillus kaustophilus (strain HTA426).